The following is a 260-amino-acid chain: NAD kinase (260 aa).

Aspartate 54 (proton acceptor) is an active-site residue. NAD(+) contacts are provided by residues 54-55 (DG), 123-124 (ND), arginine 150, aspartate 152, and 163-168 (TAYSLS).

This sequence belongs to the NAD kinase family. A divalent metal cation serves as cofactor.

It is found in the cytoplasm. The enzyme catalyses NAD(+) + ATP = ADP + NADP(+) + H(+). Its function is as follows. Involved in the regulation of the intracellular balance of NAD and NADP, and is a key enzyme in the biosynthesis of NADP. Catalyzes specifically the phosphorylation on 2'-hydroxyl of the adenosine moiety of NAD to yield NADP. This chain is NAD kinase, found in Caldicellulosiruptor saccharolyticus (strain ATCC 43494 / DSM 8903 / Tp8T 6331).